Here is a 193-residue protein sequence, read N- to C-terminus: Sporulation-specific transcriptional regulator GerR (193 aa).

The 61-residue stretch at 1-61 (MTITRQDAWT…RWNSYVRKQY (61 aa)) folds into the HTH myb-type domain. Residues 35 to 57 (FEEVGRALTRTAAACGFRWNSYV) constitute a DNA-binding region (H-T-H motif). A coiled-coil region spans residues 122–177 (AQEFQLEREKLKEQIQSLQKELEDLRSENQTLRNQLEMTEEDYKALIDIMDRARKM).

This sequence belongs to the RsfA transcriptional regulator family.

In terms of biological role, transcriptional factor that regulates the expression of several late sporulation genes. Controls genes of both sigma-E and sigma-K regulons, acting alone on some genes and in conjunction with SpoIIID or GerE on others. Regulates, directly or indirectly, the expression of genes encoding coat proteins such as cgeA, cotB, cotC, cotG, cotU and cotY. Controls late sporulation genes in two ways: directly, by binding to the promoter region of genes such as cotB, cotU and spoVIF, and acting directly on their transcription, and indirectly, through the activation of SpoVIF, which stabilizes the transcriptional activator GerE and consequently induces the expression of the GerE-dependent genes, such as cotC and cotG. Its effect is strongly positive on spoVIF, cotC, and cotG, weakly positive on cotB, and negative on cotU. In Bacillus subtilis (strain 168), this protein is Sporulation-specific transcriptional regulator GerR.